The sequence spans 272 residues: Centromere protein V-like protein 3 (272 aa).

Basic residues predominate over residues 1–17; sequence MGRVRNRATAQRRRRKR. Disordered regions lie at residues 1-23 and 65-95; these read MGRVRNRATAQRRRRKRPGDPPA and RRAREAGSRDPLPSAPLPDPPAPAESPKELD. Residues 77-88 show a composition bias toward pro residues; the sequence is PSAPLPDPPAPA. The region spanning 133–246 is the CENP-V/GFA domain; sequence HTGGCHCGAV…EEVGGGDPGE (114 aa). Residues C137, C139, C157, C159, C162, C201, and C204 each coordinate Zn(2+). Residues 240 to 272 are disordered; sequence GGGDPGEEAAEEHKAIHKTSSQSAPACPREQEQ.

It belongs to the Gfa family. Zn(2+) is required as a cofactor.

The sequence is that of Centromere protein V-like protein 3 from Homo sapiens (Human).